Reading from the N-terminus, the 317-residue chain is L-lactate dehydrogenase (317 aa).

NAD(+)-binding positions include Val16, Asp37, Arg42, Tyr67, and 81-82 (GA). Gln84 and Arg90 together coordinate substrate. NAD(+)-binding positions include Ser103, 120–122 (AAN), and Ser145. 122-125 (NPVD) lines the substrate pocket. Position 150 to 153 (150 to 153 (DSAR)) interacts with substrate. His177 functions as the Proton acceptor in the catalytic mechanism. Position 221 is a phosphotyrosine (Tyr221). Substrate is bound at residue Thr230.

It belongs to the LDH/MDH superfamily. LDH family. Homotetramer.

It localises to the cytoplasm. The catalysed reaction is (S)-lactate + NAD(+) = pyruvate + NADH + H(+). It functions in the pathway fermentation; pyruvate fermentation to lactate; (S)-lactate from pyruvate: step 1/1. Functionally, catalyzes the conversion of lactate to pyruvate. The protein is L-lactate dehydrogenase of Limosilactobacillus fermentum (strain NBRC 3956 / LMG 18251) (Lactobacillus fermentum).